A 201-amino-acid chain; its full sequence is uncharacterized protein (201 aa).

The helical transmembrane segment at 11-31 threads the bilayer; sequence IIILTIMILTIIIFTRTINGL.

It localises to the membrane. This is an uncharacterized protein from Acanthamoeba polyphaga mimivirus (APMV).